A 419-amino-acid polypeptide reads, in one-letter code: Enolase (419 aa).

Q161 is a binding site for (2R)-2-phosphoglycerate. E205 (proton donor) is an active-site residue. Mg(2+) is bound by residues D240, E283, and D309. 4 residues coordinate (2R)-2-phosphoglycerate: K334, R363, S364, and K385. K334 serves as the catalytic Proton acceptor.

The protein belongs to the enolase family. The cofactor is Mg(2+).

The protein localises to the cytoplasm. It localises to the secreted. It is found in the cell surface. It catalyses the reaction (2R)-2-phosphoglycerate = phosphoenolpyruvate + H2O. The protein operates within carbohydrate degradation; glycolysis; pyruvate from D-glyceraldehyde 3-phosphate: step 4/5. Catalyzes the reversible conversion of 2-phosphoglycerate (2-PG) into phosphoenolpyruvate (PEP). It is essential for the degradation of carbohydrates via glycolysis. The sequence is that of Enolase from Saccharolobus islandicus (strain M.16.27) (Sulfolobus islandicus).